Consider the following 131-residue polypeptide: Methylglyoxal synthase (131 aa).

The MGS-like domain occupies 1 to 131; the sequence is MKIALIAHDK…GDLDYRKLRK (131 aa). Residues H8, K12, 34–37, and 54–55 each bind substrate; these read TGTT and SG. Catalysis depends on D60, which acts as the Proton donor/acceptor. H87 is a binding site for substrate.

Belongs to the methylglyoxal synthase family.

The enzyme catalyses dihydroxyacetone phosphate = methylglyoxal + phosphate. Catalyzes the formation of methylglyoxal from dihydroxyacetone phosphate. This chain is Methylglyoxal synthase, found in Bacillus cereus (strain ATCC 14579 / DSM 31 / CCUG 7414 / JCM 2152 / NBRC 15305 / NCIMB 9373 / NCTC 2599 / NRRL B-3711).